The primary structure comprises 106 residues: MVTMNRLVLSGTVCKTPIRKVSPSGIPHCQFVLEHRSTQEEAGLSRQAWCRMPVIVSGLSSQAVTHSITVGTQLTVHGFISCHQGRNGLSKIVLHAEQIELIDSGD.

In terms of domain architecture, SSB spans 4–103 (MNRLVLSGTV…LHAEQIELID (100 aa)).

Belongs to the PriB family. As to quaternary structure, homodimer. Interacts with PriA and DnaT. Component of the replication restart primosome. Primosome assembly occurs via a 'hand-off' mechanism. PriA binds to replication forks, subsequently PriB then DnaT bind; DnaT then displaces ssDNA to generate the helicase loading substrate.

In terms of biological role, involved in the restart of stalled replication forks, which reloads the replicative helicase on sites other than the origin of replication; the PriA-PriB pathway is the major replication restart pathway. During primosome assembly it facilitates complex formation between PriA and DnaT on DNA; stabilizes PriA on DNA. Stimulates the DNA unwinding activity of PriA helicase. This is Replication restart protein PriB from Pectobacterium atrosepticum (strain SCRI 1043 / ATCC BAA-672) (Erwinia carotovora subsp. atroseptica).